A 262-amino-acid polypeptide reads, in one-letter code: Ninja-family protein 3 (262 aa).

The tract at residues 48-69 (RRNSLTCNTSKEAAGQSPEEMN) is disordered.

This sequence belongs to the Ninja family.

It is found in the nucleus. In Zea mays (Maize), this protein is Ninja-family protein 3.